Reading from the N-terminus, the 246-residue chain is Polyhedrin (246 aa).

The protein belongs to the polyhedrin family.

In terms of biological role, major component of the virus occlusion bodies, which are large proteinaceous structures (polyhedra), that protect the virus from the outside environment for extended periods until they are ingested by insect larvae. This chain is Polyhedrin (PH), found in Lepidoptera (butterflies and moths).